Reading from the N-terminus, the 385-residue chain is Glucans biosynthesis protein C (385 aa).

10 consecutive transmembrane segments (helical) span residues 17-37, 60-80, 91-111, 137-157, 173-193, 212-232, 245-262, 274-294, 311-331, and 338-358; these read AWLM…SHTW, MQVF…RYPL, VGIP…IMLQ, ISHL…VWIF, KFSM…YAVI, FIVM…LAFI, RGST…LLNQ, TESV…FSFG, ASLF…AYIT, and WLGF…LYEI.

Belongs to the acyltransferase 3 family. OpgC subfamily.

Its subcellular location is the cell membrane. It participates in glycan metabolism; osmoregulated periplasmic glucan (OPG) biosynthesis. Necessary for the succinyl substitution of periplasmic glucans. Could catalyze the transfer of succinyl residues from the cytoplasmic side of the membrane to the nascent glucan backbones on the periplasmic side of the membrane. In Escherichia coli O81 (strain ED1a), this protein is Glucans biosynthesis protein C.